Reading from the N-terminus, the 278-residue chain is MQYEIVSAGEDVDDERARGRRAAAPAAPSSAVPSSAALSSAALSSAARPTGAPPATAAARRGRDLPRERLLARGPAALSDAELVALLLGSGLPGHDVFALAHTLLARFGSLRALLDAAPDDFKGLRGIGPARTAILVAVVELARRALAEKARERPLVDSPGAVDDYLRLLIGTRPREVFVCLFLDARHRLVQTEETAHGSLTRMAVYPREIVRRALALNAAALIVAHNHPSGAVRPSAADRRLTRVLRDALALVDIKLIDHFVVGASDTFSFAQAGWI.

Residues M1–D64 are disordered. Residues A22–A59 are compositionally biased toward low complexity. The 123-residue stretch at L156–I278 folds into the MPN domain. H227, H229, and D240 together coordinate Zn(2+). The JAMM motif signature appears at H227–D240.

The protein belongs to the UPF0758 family.

This Burkholderia pseudomallei (strain 668) protein is UPF0758 protein BURPS668_0979.